The sequence spans 341 residues: Holliday junction branch migration complex subunit RuvB (341 aa).

Residues 4–185 (TDRLIVPTAV…FGIVARLEFY (182 aa)) are large ATPase domain (RuvB-L). Residues leucine 24, arginine 25, glycine 66, lysine 69, threonine 70, threonine 71, 132-134 (EDF), arginine 175, tyrosine 185, and arginine 222 contribute to the ATP site. Threonine 70 contributes to the Mg(2+) binding site. The segment at 186–256 (SAEELGYIVH…VADAALVMLD (71 aa)) is small ATPAse domain (RuvB-S). A head domain (RuvB-H) region spans residues 259–341 (RAGLDVMDRK…ATPASDAELF (83 aa)). DNA-binding residues include arginine 295, arginine 314, and arginine 319.

This sequence belongs to the RuvB family. As to quaternary structure, homohexamer. Forms an RuvA(8)-RuvB(12)-Holliday junction (HJ) complex. HJ DNA is sandwiched between 2 RuvA tetramers; dsDNA enters through RuvA and exits via RuvB. An RuvB hexamer assembles on each DNA strand where it exits the tetramer. Each RuvB hexamer is contacted by two RuvA subunits (via domain III) on 2 adjacent RuvB subunits; this complex drives branch migration. In the full resolvosome a probable DNA-RuvA(4)-RuvB(12)-RuvC(2) complex forms which resolves the HJ.

The protein resides in the cytoplasm. The enzyme catalyses ATP + H2O = ADP + phosphate + H(+). The RuvA-RuvB-RuvC complex processes Holliday junction (HJ) DNA during genetic recombination and DNA repair, while the RuvA-RuvB complex plays an important role in the rescue of blocked DNA replication forks via replication fork reversal (RFR). RuvA specifically binds to HJ cruciform DNA, conferring on it an open structure. The RuvB hexamer acts as an ATP-dependent pump, pulling dsDNA into and through the RuvAB complex. RuvB forms 2 homohexamers on either side of HJ DNA bound by 1 or 2 RuvA tetramers; 4 subunits per hexamer contact DNA at a time. Coordinated motions by a converter formed by DNA-disengaged RuvB subunits stimulates ATP hydrolysis and nucleotide exchange. Immobilization of the converter enables RuvB to convert the ATP-contained energy into a lever motion, pulling 2 nucleotides of DNA out of the RuvA tetramer per ATP hydrolyzed, thus driving DNA branch migration. The RuvB motors rotate together with the DNA substrate, which together with the progressing nucleotide cycle form the mechanistic basis for DNA recombination by continuous HJ branch migration. Branch migration allows RuvC to scan DNA until it finds its consensus sequence, where it cleaves and resolves cruciform DNA. The chain is Holliday junction branch migration complex subunit RuvB from Thiobacillus denitrificans (strain ATCC 25259 / T1).